Reading from the N-terminus, the 517-residue chain is Putative succinate-semialdehyde dehydrogenase [NADP(+)] (517 aa).

Residues 157 to 158, 181 to 184, and 232 to 233 each bind NADP(+); these read WN, KPDS, and GS. Glu-254 (proton acceptor) is an active-site residue. Leu-255 contacts NADP(+). The active-site Nucleophile is the Cys-288. Glu-386 is a binding site for NADP(+).

This sequence belongs to the aldehyde dehydrogenase family.

It carries out the reaction succinate semialdehyde + NADP(+) + H2O = succinate + NADPH + 2 H(+). Catalyzes the NADP(+)-dependent oxidation of succinate semialdehyde to succinate. Although it has succinate semialdehyde dehydrogenase activity, is likely to act physiologically on a different aldehyde(s). This Mycolicibacterium smegmatis (strain ATCC 700084 / mc(2)155) (Mycobacterium smegmatis) protein is Putative succinate-semialdehyde dehydrogenase [NADP(+)] (gabD2).